Here is a 267-residue protein sequence, read N- to C-terminus: Zinc finger protein ZAT1 (267 aa).

A C2H2-type 1 zinc finger spans residues 5–27; it reads HKCKLCWKSFANGRALGGHMRSH. Disordered stretches follow at residues 34-99 and 181-204; these read PSQP…ADIK and SHKK…KKKS. Residues 52–62 are compositionally biased toward basic and acidic residues; that stretch reads QDRESETESSK. The segment covering 63-73 has biased composition (basic residues); that stretch reads KPSRKRSRLNR. Residues 83 to 97 show a composition bias toward basic and acidic residues; sequence QSNEEGKSETARAAD. 2 C2H2-type zinc fingers span residues 160 to 182 and 209 to 231; these read FECE…RASH and HECP…KRSH.

The protein localises to the nucleus. In terms of biological role, probable transcription factor that may be involved in stress responses. This Arabidopsis thaliana (Mouse-ear cress) protein is Zinc finger protein ZAT1 (ZAT1).